The primary structure comprises 298 residues: tRNA (guanine(9)-N1)-methyltransferase (298 aa).

The span at 1–10 shows a compositional bias: polar residues; sequence MSDTSENSNA. The tract at residues 1 to 44 is disordered; that stretch reads MSDTSENSNAEIPADTSDVKDKPKPIVRAPQFPPPPEGISKSQW. The region spanning 96-285 is the SAM-dependent MTase TRM10-type domain; it reads PPKVNLNQSD…SVLPPRKLEV (190 aa). S-adenosyl-L-methionine-binding positions include 192-193, Gly212, 216-220, Cys224, Leu238, and 250-252; these read LT, DKNRH, and KVL. The active-site Proton acceptor is the Asp216.

The protein belongs to the class IV-like SAM-binding methyltransferase superfamily. TRM10 family. As to quaternary structure, monomer.

The protein localises to the cytoplasm. The protein resides in the nucleus. The enzyme catalyses guanosine(9) in tRNA + S-adenosyl-L-methionine = N(1)-methylguanosine(9) in tRNA + S-adenosyl-L-homocysteine + H(+). In terms of biological role, S-adenosyl-L-methionine-dependent guanine N(1)-methyltransferase that catalyzes the formation of N(1)-methylguanine at position 9 (m1G9) in cytoplasmic tRNA. The chain is tRNA (guanine(9)-N1)-methyltransferase from Kluyveromyces lactis (strain ATCC 8585 / CBS 2359 / DSM 70799 / NBRC 1267 / NRRL Y-1140 / WM37) (Yeast).